Reading from the N-terminus, the 414-residue chain is Glutamyl-tRNA reductase (414 aa).

Substrate is bound by residues 49–52, serine 108, 113–115, and glutamine 119; these read TCNR and EPQ. Cysteine 50 (nucleophile) is an active-site residue. 188 to 193 contributes to the NADP(+) binding site; sequence GAGQTG.

The protein belongs to the glutamyl-tRNA reductase family. Homodimer.

It carries out the reaction (S)-4-amino-5-oxopentanoate + tRNA(Glu) + NADP(+) = L-glutamyl-tRNA(Glu) + NADPH + H(+). It functions in the pathway porphyrin-containing compound metabolism; protoporphyrin-IX biosynthesis; 5-aminolevulinate from L-glutamyl-tRNA(Glu): step 1/2. Its function is as follows. Catalyzes the NADPH-dependent reduction of glutamyl-tRNA(Glu) to glutamate 1-semialdehyde (GSA). The sequence is that of Glutamyl-tRNA reductase from Francisella philomiragia subsp. philomiragia (strain ATCC 25017 / CCUG 19701 / FSC 153 / O#319-036).